Consider the following 46-residue polypeptide: Osteocalcin 2 (46 aa).

One can recognise a Gla domain in the interval Ala-1–Gly-43. Phosphothreonine is present on Thr-6. 4 residues coordinate Ca(2+): Glu-13, Glu-17, Glu-20, and Asp-26. 3 positions are modified to 4-carboxyglutamate: Glu-13, Glu-17, and Glu-20. Cys-19 and Cys-25 are disulfide-bonded. Glu-27 is modified (4-carboxyglutamate).

The protein belongs to the osteocalcin/matrix Gla protein family. In terms of processing, gamma-carboxyglutamate residues are formed by vitamin K dependent carboxylation by GGCX. These residues are essential for the binding of calcium.

It is found in the secreted. In terms of biological role, the carboxylated form is one of the main organic components of the bone matrix, which constitutes 1-2% of the total bone protein. The carboxylated form binds strongly to apatite and calcium. This is Osteocalcin 2 from Solea senegalensis (Senegalese sole).